Consider the following 280-residue polypeptide: 3-phenylpropionate-dihydrodiol/cinnamic acid-dihydrodiol dehydrogenase (280 aa).

Serine 143 contacts substrate. The Proton acceptor role is filled by tyrosine 156.

Belongs to the short-chain dehydrogenases/reductases (SDR) family.

The catalysed reaction is 3-(cis-5,6-dihydroxycyclohexa-1,3-dien-1-yl)propanoate + NAD(+) = 3-(2,3-dihydroxyphenyl)propanoate + NADH + H(+). It carries out the reaction (2E)-3-(cis-5,6-dihydroxycyclohexa-1,3-dien-1-yl)prop-2-enoate + NAD(+) = (2E)-3-(2,3-dihydroxyphenyl)prop-2-enoate + NADH + H(+). It participates in aromatic compound metabolism; 3-phenylpropanoate degradation. In terms of biological role, converts 3-phenylpropionate-dihydrodiol (PP-dihydrodiol) and cinnamic acid-dihydrodiol (CI-dihydrodiol) into 3-(2,3-dihydroxylphenyl)propanoic acid (DHPP) and 2,3-dihydroxicinnamic acid (DHCI), respectively. The sequence is that of 3-phenylpropionate-dihydrodiol/cinnamic acid-dihydrodiol dehydrogenase from Photorhabdus laumondii subsp. laumondii (strain DSM 15139 / CIP 105565 / TT01) (Photorhabdus luminescens subsp. laumondii).